Reading from the N-terminus, the 251-residue chain is B3 domain-containing protein At2g24670 (251 aa).

Residues 48–111 form a disordered region; the sequence is TTPSTVMESK…SSKTREPTPG (64 aa). Basic and acidic residues predominate over residues 56–70; it reads SKSHIHDHSLRESPT. The TF-B3 DNA-binding region spans 153-249; the sequence is VSQIVELEFL…TLYFALVPLY (97 aa).

It localises to the nucleus. In Arabidopsis thaliana (Mouse-ear cress), this protein is B3 domain-containing protein At2g24670.